The chain runs to 425 residues: Histidine--tRNA ligase (425 aa).

The protein belongs to the class-II aminoacyl-tRNA synthetase family. As to quaternary structure, homodimer.

It is found in the cytoplasm. The catalysed reaction is tRNA(His) + L-histidine + ATP = L-histidyl-tRNA(His) + AMP + diphosphate + H(+). This chain is Histidine--tRNA ligase, found in Histophilus somni (strain 129Pt) (Haemophilus somnus).